The sequence spans 388 residues: Leucine aminopeptidase 1 (388 aa).

The first 19 residues, 1-19, serve as a signal peptide directing secretion; it reads MKLPALLILGVAASTMVLA. A propeptide spanning residues 20–88 is cleaved from the precursor; the sequence is AIAPDQVPLN…LPKVFPTPAV (69 aa). Asn-96, Asn-119, Asn-149, Asn-164, and Asn-181 each carry an N-linked (GlcNAc...) asparagine glycan. Residues His-189 and Asp-207 each contribute to the Zn(2+) site. An N-linked (GlcNAc...) asparagine glycan is attached at Asn-232. Positions 246 and 273 each coordinate Zn(2+). A disulfide bond links Cys-322 and Cys-326. Residue His-355 participates in Zn(2+) binding.

This sequence belongs to the peptidase M28 family. M28E subfamily. As to quaternary structure, monomer. Zn(2+) is required as a cofactor.

It localises to the secreted. In terms of biological role, extracellular aminopeptidase that allows assimilation of proteinaceous substrates. The protein is Leucine aminopeptidase 1 (LAP1) of Paracoccidioides brasiliensis (strain Pb03).